Here is a 321-residue protein sequence, read N- to C-terminus: Lipoyl synthase (321 aa).

Residues Cys-68, Cys-73, Cys-79, Cys-94, Cys-98, Cys-101, and Ser-308 each contribute to the [4Fe-4S] cluster site. Positions 80-297 constitute a Radical SAM core domain; sequence FNHGTATFMI…KALADELGFT (218 aa).

The protein belongs to the radical SAM superfamily. Lipoyl synthase family. Requires [4Fe-4S] cluster as cofactor.

It localises to the cytoplasm. It carries out the reaction [[Fe-S] cluster scaffold protein carrying a second [4Fe-4S](2+) cluster] + N(6)-octanoyl-L-lysyl-[protein] + 2 oxidized [2Fe-2S]-[ferredoxin] + 2 S-adenosyl-L-methionine + 4 H(+) = [[Fe-S] cluster scaffold protein] + N(6)-[(R)-dihydrolipoyl]-L-lysyl-[protein] + 4 Fe(3+) + 2 hydrogen sulfide + 2 5'-deoxyadenosine + 2 L-methionine + 2 reduced [2Fe-2S]-[ferredoxin]. It participates in protein modification; protein lipoylation via endogenous pathway; protein N(6)-(lipoyl)lysine from octanoyl-[acyl-carrier-protein]: step 2/2. In terms of biological role, catalyzes the radical-mediated insertion of two sulfur atoms into the C-6 and C-8 positions of the octanoyl moiety bound to the lipoyl domains of lipoate-dependent enzymes, thereby converting the octanoylated domains into lipoylated derivatives. This Shewanella oneidensis (strain ATCC 700550 / JCM 31522 / CIP 106686 / LMG 19005 / NCIMB 14063 / MR-1) protein is Lipoyl synthase.